We begin with the raw amino-acid sequence, 157 residues long: 2-C-methyl-D-erythritol 2,4-cyclodiphosphate synthase (157 aa).

A divalent metal cation-binding residues include Asp8 and His10. Residues 8-10 (DVH) and 34-35 (HS) contribute to the 4-CDP-2-C-methyl-D-erythritol 2-phosphate site. His42 serves as a coordination point for a divalent metal cation. 4-CDP-2-C-methyl-D-erythritol 2-phosphate is bound by residues 56–58 (DIG), 132–135 (TTNE), and Arg142.

This sequence belongs to the IspF family. As to quaternary structure, homotrimer. A divalent metal cation serves as cofactor.

The catalysed reaction is 4-CDP-2-C-methyl-D-erythritol 2-phosphate = 2-C-methyl-D-erythritol 2,4-cyclic diphosphate + CMP. Its pathway is isoprenoid biosynthesis; isopentenyl diphosphate biosynthesis via DXP pathway; isopentenyl diphosphate from 1-deoxy-D-xylulose 5-phosphate: step 4/6. Involved in the biosynthesis of isopentenyl diphosphate (IPP) and dimethylallyl diphosphate (DMAPP), two major building blocks of isoprenoid compounds. Catalyzes the conversion of 4-diphosphocytidyl-2-C-methyl-D-erythritol 2-phosphate (CDP-ME2P) to 2-C-methyl-D-erythritol 2,4-cyclodiphosphate (ME-CPP) with a corresponding release of cytidine 5-monophosphate (CMP). This Pelodictyon phaeoclathratiforme (strain DSM 5477 / BU-1) protein is 2-C-methyl-D-erythritol 2,4-cyclodiphosphate synthase.